A 251-amino-acid polypeptide reads, in one-letter code: tRNA pseudouridine synthase A (251 aa).

Asp26 functions as the Nucleophile in the catalytic mechanism. Tyr98 lines the substrate pocket.

This sequence belongs to the tRNA pseudouridine synthase TruA family. In terms of assembly, homodimer.

The catalysed reaction is uridine(38/39/40) in tRNA = pseudouridine(38/39/40) in tRNA. Functionally, formation of pseudouridine at positions 38, 39 and 40 in the anticodon stem and loop of transfer RNAs. The polypeptide is tRNA pseudouridine synthase A (Mycolicibacterium paratuberculosis (strain ATCC BAA-968 / K-10) (Mycobacterium paratuberculosis)).